Here is a 358-residue protein sequence, read N- to C-terminus: UDP-N-acetylglucosamine--N-acetylmuramyl-(pentapeptide) pyrophosphoryl-undecaprenol N-acetylglucosamine transferase (358 aa).

UDP-N-acetyl-alpha-D-glucosamine is bound by residues T13–G15, N125, R162, S190, I244, A263–E268, and Q289.

Belongs to the glycosyltransferase 28 family. MurG subfamily.

The protein resides in the cell inner membrane. The catalysed reaction is di-trans,octa-cis-undecaprenyl diphospho-N-acetyl-alpha-D-muramoyl-L-alanyl-D-glutamyl-meso-2,6-diaminopimeloyl-D-alanyl-D-alanine + UDP-N-acetyl-alpha-D-glucosamine = di-trans,octa-cis-undecaprenyl diphospho-[N-acetyl-alpha-D-glucosaminyl-(1-&gt;4)]-N-acetyl-alpha-D-muramoyl-L-alanyl-D-glutamyl-meso-2,6-diaminopimeloyl-D-alanyl-D-alanine + UDP + H(+). Its pathway is cell wall biogenesis; peptidoglycan biosynthesis. Its function is as follows. Cell wall formation. Catalyzes the transfer of a GlcNAc subunit on undecaprenyl-pyrophosphoryl-MurNAc-pentapeptide (lipid intermediate I) to form undecaprenyl-pyrophosphoryl-MurNAc-(pentapeptide)GlcNAc (lipid intermediate II). This is UDP-N-acetylglucosamine--N-acetylmuramyl-(pentapeptide) pyrophosphoryl-undecaprenol N-acetylglucosamine transferase from Halorhodospira halophila (strain DSM 244 / SL1) (Ectothiorhodospira halophila (strain DSM 244 / SL1)).